Here is an 84-residue protein sequence, read N- to C-terminus: Large ribosomal subunit protein bL27 (84 aa).

Positions 1–23 (MAHKKGASSSRNGRESAAQRLGV) are disordered.

It belongs to the bacterial ribosomal protein bL27 family.

This chain is Large ribosomal subunit protein bL27, found in Salinispora arenicola (strain CNS-205).